Reading from the N-terminus, the 479-residue chain is UDP-N-acetylmuramoylalanine--D-glutamate ligase (479 aa).

110 to 116 (GTNGKTS) serves as a coordination point for ATP.

Belongs to the MurCDEF family.

The protein resides in the cytoplasm. It catalyses the reaction UDP-N-acetyl-alpha-D-muramoyl-L-alanine + D-glutamate + ATP = UDP-N-acetyl-alpha-D-muramoyl-L-alanyl-D-glutamate + ADP + phosphate + H(+). It functions in the pathway cell wall biogenesis; peptidoglycan biosynthesis. Cell wall formation. Catalyzes the addition of glutamate to the nucleotide precursor UDP-N-acetylmuramoyl-L-alanine (UMA). The polypeptide is UDP-N-acetylmuramoylalanine--D-glutamate ligase (Bifidobacterium adolescentis (strain ATCC 15703 / DSM 20083 / NCTC 11814 / E194a)).